The primary structure comprises 460 residues: tRNA (guanine(10)-N(2))-methyltransferase TRMT11 (460 aa).

At A2 the chain carries N-acetylalanine.

Belongs to the class I-like SAM-binding methyltransferase superfamily. TRM11 methyltransferase family. As to quaternary structure, part of the heterodimeric TRMT11-TRM112 methyltransferase complex; this complex forms an active tRNA methyltransferase, where TRMT112 acts as an activator of the catalytic subunit TRMT11.

The protein resides in the cytoplasm. The catalysed reaction is guanosine(10) in tRNA + S-adenosyl-L-methionine = N(2)-methylguanosine(10) in tRNA + S-adenosyl-L-homocysteine + H(+). Catalytic subunit of the TRMT11-TRM112 methyltransferase complex, that specifically mediates the S-adenosyl-L-methionine-dependent N(2)-methylation of guanosine nucleotide at position 10 (m2G10) in tRNAs. This is one of the major tRNA (guanine-N(2))-methyltransferases. The sequence is that of tRNA (guanine(10)-N(2))-methyltransferase TRMT11 from Bos taurus (Bovine).